Reading from the N-terminus, the 743-residue chain is Phosphoribosylformylglycinamidine synthase subunit PurL (743 aa).

His53 is an active-site residue. ATP contacts are provided by Tyr56 and Lys95. Glu97 is a binding site for Mg(2+). Residues 98–101 (SHNH) and Arg120 each bind substrate. The active-site Proton acceptor is His99. Asp121 contributes to the Mg(2+) binding site. Residue Gln245 coordinates substrate. Asp275 is a Mg(2+) binding site. A substrate-binding site is contributed by 319–321 (ESQ). 2 residues coordinate ATP: Asp502 and Gly539. Residue Asn540 participates in Mg(2+) binding. Ser542 contacts substrate.

This sequence belongs to the FGAMS family. Monomer. Part of the FGAM synthase complex composed of 1 PurL, 1 PurQ and 2 PurS subunits.

The protein resides in the cytoplasm. It catalyses the reaction N(2)-formyl-N(1)-(5-phospho-beta-D-ribosyl)glycinamide + L-glutamine + ATP + H2O = 2-formamido-N(1)-(5-O-phospho-beta-D-ribosyl)acetamidine + L-glutamate + ADP + phosphate + H(+). It functions in the pathway purine metabolism; IMP biosynthesis via de novo pathway; 5-amino-1-(5-phospho-D-ribosyl)imidazole from N(2)-formyl-N(1)-(5-phospho-D-ribosyl)glycinamide: step 1/2. Part of the phosphoribosylformylglycinamidine synthase complex involved in the purines biosynthetic pathway. Catalyzes the ATP-dependent conversion of formylglycinamide ribonucleotide (FGAR) and glutamine to yield formylglycinamidine ribonucleotide (FGAM) and glutamate. The FGAM synthase complex is composed of three subunits. PurQ produces an ammonia molecule by converting glutamine to glutamate. PurL transfers the ammonia molecule to FGAR to form FGAM in an ATP-dependent manner. PurS interacts with PurQ and PurL and is thought to assist in the transfer of the ammonia molecule from PurQ to PurL. In Lactobacillus helveticus (strain DPC 4571), this protein is Phosphoribosylformylglycinamidine synthase subunit PurL.